The chain runs to 293 residues: Probable metal transport system membrane protein CT_417 (293 aa).

Transmembrane regions (helical) follow at residues 18–38, 41–61, 68–88, 101–121, 135–155, 187–207, and 242–262; these read SLLAAFGASIAAGIIGSYIVV, IVSISGSIAHSILGGVGIALW, LPISPLHGAIASAIFVAICIG, IISMIWSIGMAIGIICISKLP, ILWVTPQDLYFLGILDLFIVA, LLLILTAITTVVLMYVMGVIL, and FLGIMLAYLLDLPVGPVIAIL.

Belongs to the ABC-3 integral membrane protein family.

It localises to the cell inner membrane. Part of an ATP-driven transport system CT_415/CT_416/CT_417 for a metal. This is Probable metal transport system membrane protein CT_417 from Chlamydia trachomatis serovar D (strain ATCC VR-885 / DSM 19411 / UW-3/Cx).